The primary structure comprises 37 residues: Large ribosomal subunit protein bL36 (37 aa).

Belongs to the bacterial ribosomal protein bL36 family.

This is Large ribosomal subunit protein bL36 from Nitratiruptor sp. (strain SB155-2).